A 344-amino-acid polypeptide reads, in one-letter code: Heat-inducible transcription repressor HrcA (344 aa).

It belongs to the HrcA family.

In terms of biological role, negative regulator of class I heat shock genes (grpE-dnaK-dnaJ and groELS operons). Prevents heat-shock induction of these operons. The sequence is that of Heat-inducible transcription repressor HrcA from Corynebacterium aurimucosum (strain ATCC 700975 / DSM 44827 / CIP 107346 / CN-1) (Corynebacterium nigricans).